The chain runs to 236 residues: 2,3,4,5-tetrahydropyridine-2,6-dicarboxylate N-acetyltransferase (236 aa).

Belongs to the transferase hexapeptide repeat family. DapH subfamily.

It carries out the reaction (S)-2,3,4,5-tetrahydrodipicolinate + acetyl-CoA + H2O = L-2-acetamido-6-oxoheptanedioate + CoA. The protein operates within amino-acid biosynthesis; L-lysine biosynthesis via DAP pathway; LL-2,6-diaminopimelate from (S)-tetrahydrodipicolinate (acetylase route): step 1/3. Catalyzes the transfer of an acetyl group from acetyl-CoA to tetrahydrodipicolinate. The protein is 2,3,4,5-tetrahydropyridine-2,6-dicarboxylate N-acetyltransferase of Geobacillus kaustophilus (strain HTA426).